Here is a 501-residue protein sequence, read N- to C-terminus: Na(+)/H(+) antiporter NhaB (501 aa).

Transmembrane regions (helical) follow at residues 24–44 (VILL…PGVA), 46–66 (WLLI…YPLL), 90–110 (VLTN…IYFM), 145–165 (FLDA…FFSV), 206–226 (LLMH…VGEP), 239–259 (FAGF…AGLA), 302–319 (ALWI…GLAF), 351–371 (FQES…VAVI), 395–415 (MFFI…VATV), 450–470 (VATP…IAPL), and 478–498 (MVIM…YMVT).

Belongs to the NhaB Na(+)/H(+) (TC 2.A.34) antiporter family.

It localises to the cell inner membrane. It catalyses the reaction 2 Na(+)(in) + 3 H(+)(out) = 2 Na(+)(out) + 3 H(+)(in). Its function is as follows. Na(+)/H(+) antiporter that extrudes sodium in exchange for external protons. The polypeptide is Na(+)/H(+) antiporter NhaB (Marinobacter nauticus (strain ATCC 700491 / DSM 11845 / VT8) (Marinobacter aquaeolei)).